Reading from the N-terminus, the 237-residue chain is Putative HTH-type transcriptional regulator ycf28 (237 aa).

Residues 155–228 enclose the HTH crp-type domain; sequence KSITNRLISL…KKKVIIHDPI (74 aa). Residues 188–207 constitute a DNA-binding region (H-T-H motif); that stretch reads HKVLAQIIGSNRVSITRIIS.

It is found in the plastid. Its subcellular location is the chloroplast. This chain is Putative HTH-type transcriptional regulator ycf28 (ycf28), found in Porphyra purpurea (Red seaweed).